The chain runs to 463 residues: Cytidylate cyclase (463 aa).

The region spanning 122–231 (VTMFMDIIGS…IGIRIGIDLG (110 aa)) is the Guanylate cyclase domain. Phe125 is a binding site for a ribonucleoside 5'-triphosphate. Mn(2+) contacts are provided by Asp127, Ile128, and Asp171. The interval 334–454 (KPSRIKVVIS…VISNDTVIER (121 aa)) is AGS-C domain.

Belongs to the adenylyl cyclase class-4/guanylyl cyclase family. Pyrimidine cyclase subfamily. In terms of assembly, homodimer. The cofactor is Mn(2+).

The protein resides in the cytoplasm. It carries out the reaction CTP = 3',5'-cyclic CMP + diphosphate. Functionally, pycsar (pyrimidine cyclase system for antiphage resistance) provides immunity against bacteriophage. The pyrimidine cyclase (PycC) synthesizes cyclic nucleotides in response to infection; these serve as specific second messenger signals. The signal activates the adjacent effector, leading to bacterial cell death and abortive phage infection. A clade E Pycsar system. In terms of biological role, the pyrimidine cyclase gene of a two-gene Pycsar system, generates cyclic CMP (cCMP) from CTP in response to bacteriophage infection. Has little to no activity on ATP, GTP or UTP. Expression of this and adjacent effector Ec303145PycTM (AC P0DV27) confers resistance to bacteriophage P1, T5, lambda-vir and phi27. This chain is Cytidylate cyclase, found in Escherichia coli.